The sequence spans 392 residues: Anhydro-N-acetylmuramic acid kinase (392 aa).

22-29 (GTSMDGVD) contributes to the ATP binding site.

The protein belongs to the anhydro-N-acetylmuramic acid kinase family.

It catalyses the reaction 1,6-anhydro-N-acetyl-beta-muramate + ATP + H2O = N-acetyl-D-muramate 6-phosphate + ADP + H(+). The protein operates within amino-sugar metabolism; 1,6-anhydro-N-acetylmuramate degradation. It functions in the pathway cell wall biogenesis; peptidoglycan recycling. Functionally, catalyzes the specific phosphorylation of 1,6-anhydro-N-acetylmuramic acid (anhMurNAc) with the simultaneous cleavage of the 1,6-anhydro ring, generating MurNAc-6-P. Is required for the utilization of anhMurNAc either imported from the medium or derived from its own cell wall murein, and thus plays a role in cell wall recycling. This chain is Anhydro-N-acetylmuramic acid kinase, found in Burkholderia mallei (strain NCTC 10229).